A 295-amino-acid chain; its full sequence is Nitrogenase iron protein (295 aa).

10 to 17 provides a ligand contact to ATP; it reads GKGGIGKS. Cys98 is a binding site for [4Fe-4S] cluster. An ADP-ribosylarginine; by dinitrogenase reductase ADP-ribosyltransferase modification is found at Arg101. A [4Fe-4S] cluster-binding site is contributed by Cys133.

This sequence belongs to the NifH/BchL/ChlL family. In terms of assembly, homodimer. [4Fe-4S] cluster serves as cofactor. The reversible ADP-ribosylation of Arg-101 inactivates the nitrogenase reductase and regulates nitrogenase activity.

It carries out the reaction N2 + 8 reduced [2Fe-2S]-[ferredoxin] + 16 ATP + 16 H2O = H2 + 8 oxidized [2Fe-2S]-[ferredoxin] + 2 NH4(+) + 16 ADP + 16 phosphate + 6 H(+). Its function is as follows. The key enzymatic reactions in nitrogen fixation are catalyzed by the nitrogenase complex, which has 2 components: the iron protein and the molybdenum-iron protein. The protein is Nitrogenase iron protein of Tolumonas auensis (strain DSM 9187 / NBRC 110442 / TA 4).